A 304-amino-acid chain; its full sequence is Acetaldehyde dehydrogenase 4 (304 aa).

Residue Cys131 is the Acyl-thioester intermediate of the active site. NAD(+) is bound by residues 162-170 (SAGPGTRKN) and Asn273.

The protein belongs to the acetaldehyde dehydrogenase family. As to quaternary structure, heterotetramer composed of two BphI (aldolase) and two BphJ (dehydrogenase).

It catalyses the reaction acetaldehyde + NAD(+) + CoA = acetyl-CoA + NADH + H(+). The catalysed reaction is propanal + NAD(+) + CoA = propanoyl-CoA + NADH + H(+). It participates in xenobiotic degradation; polychlorinated biphenyl degradation. Bound pyruvate or other intermediates in the aldol addition reaction catalyzed by BphI allosterically activates BphJ reductive deacylation activity. Its function is as follows. Catalyzes the conversion of acetaldehyde or propanal to acetyl-CoA or propanoyl-CoA, respectively, using NAD(+) and coenzyme A. Displays broad specificity since it can utilize aliphatic aldehydes from two to five carbons in length as substrates; the aldehyde substrates can be directly channeled from the aldolase BphI to the dehydrogenase BphJ. Is the final enzyme in the meta-cleavage pathway for the degradation of polychlorinated biphenyls (PCBs). Is also able to utilize NADP(+) instead of NAD(+). Is not active with succinic semialdehyde or picolinaldehyde as substrates. Can also catalyze the reverse reaction, i.e. the reductive deacylation of acetyl-CoA to acetaldehyde, which is then channeled to the BphI active site. The BphI-BphJ enzyme complex exhibits unique bidirectionality in substrate channeling and allosteric activation. The protein is Acetaldehyde dehydrogenase 4 (bphJ) of Paraburkholderia xenovorans (strain LB400).